A 259-amino-acid chain; its full sequence is uncharacterized protein (259 aa).

The 231-residue stretch at 19–249 (TKIPGAKYVI…DEVINTIKKK (231 aa)) folds into the Radical SAM core domain. Residues Cys-34, Cys-38, and Cys-41 each contribute to the [4Fe-4S] cluster site.

Requires [4Fe-4S] cluster as cofactor.

This is an uncharacterized protein from Methanocaldococcus jannaschii (strain ATCC 43067 / DSM 2661 / JAL-1 / JCM 10045 / NBRC 100440) (Methanococcus jannaschii).